The following is a 282-amino-acid chain: MIYETAPAKINLTLDTLFKRDDGFHEVEMIMTTIDLNDRLSFELRKDKKIVVDVEQTYVPSDNKNLAYKAAELMKKTYNLQQGLTITIDKNIPVSAGLAGGSTDAAATMRGMNRLYKLNRPLEELCALGIQIGTDIPFCILGKTALCKGKGEIIEYLDKPPSAWVVVAKPDLGISSPDIFKKLDLTQPHTVHTEACENALISGDYEQLCKSLSNRLEPVSGKMHDEILKIKANMLENGADGAVMSGSGPTVYALARKERQARHIYNAVNGCCNEVHIVRLLG.

The active site involves Lys9. 93-103 is a binding site for ATP; it reads PVSAGLAGGST. The active site involves Asp135.

Belongs to the GHMP kinase family. IspE subfamily.

It carries out the reaction 4-CDP-2-C-methyl-D-erythritol + ATP = 4-CDP-2-C-methyl-D-erythritol 2-phosphate + ADP + H(+). Its function is as follows. Catalyzes the phosphorylation of the position 2 hydroxy group of 4-diphosphocytidyl-2C-methyl-D-erythritol. This is Putative 4-diphosphocytidyl-2-C-methyl-D-erythritol kinase from Staphylococcus saprophyticus subsp. saprophyticus (strain ATCC 15305 / DSM 20229 / NCIMB 8711 / NCTC 7292 / S-41).